Reading from the N-terminus, the 393-residue chain is Venom metalloproteinase BumaMPs1 (393 aa).

Residues 1-15 (MFVHLLVLLFAAVEA) form the signal peptide. N-linked (GlcNAc...) asparagine glycosylation is present at asparagine 158. In terms of domain architecture, Peptidase M12B spans 167 to 377 (KCVKIEYVFV…RVEELITRRK (211 aa)). Position 323 (histidine 323) interacts with Zn(2+). Glutamate 324 is a catalytic residue. Zn(2+) contacts are provided by histidine 327 and histidine 333. The disintegrin-like domain stretch occupies residues 378-393 (INHCIVETCDGKRKRN).

This sequence belongs to the venom metalloproteinase (M12B) family. Zn(2+) serves as cofactor. Contains several disulfide bonds. In terms of tissue distribution, expressed by the venom gland.

It is found in the secreted. Metalloprotease. The chain is Venom metalloproteinase BumaMPs1 from Olivierus martensii (Manchurian scorpion).